A 561-amino-acid polypeptide reads, in one-letter code: Mercuric reductase (561 aa).

Residues 2 to 65 (THLKITGMTC…AVAGLGYKAT (64 aa)) form the HMA domain. Positions 11 and 14 each coordinate a metal cation. Residues Ala110, Gly130, and Thr135 each coordinate FAD. Cys136 and Cys141 are joined by a disulfide. FAD-binding residues include Lys145, Ala211, Asp403, and Val411. Hg(2+) contacts are provided by Cys558 and Cys559.

Belongs to the class-I pyridine nucleotide-disulfide oxidoreductase family. In terms of assembly, homodimer. The cofactor is FAD.

The enzyme catalyses Hg + NADP(+) + H(+) = Hg(2+) + NADPH. In terms of biological role, resistance to Hg(2+) in bacteria appears to be governed by a specialized system which includes mercuric reductase. MerA protein is responsible for volatilizing mercury as Hg(0). Plays a pivotal role in mercury resistance under thiol-depleted conditions and cell protection. Protects cells under thiol-depleted conditions. The protein is Mercuric reductase (merA) of Pseudomonas aeruginosa.